Consider the following 325-residue polypeptide: E3 ubiquitin-protein ligase SIAH2 (325 aa).

The segment covering 1-15 (MSRPSSTGPSANKPC) has biased composition (polar residues). The tract at residues 1-43 (MSRPSSTGPSANKPCSKQPPPPQTPHAPSPAAPPAAATISAAG) is disordered. Residue Ser6 is modified to Phosphoserine. Position 16 is a phosphoserine; by DYRK2 (Ser16). The span at 17 to 33 (KQPPPPQTPHAPSPAAP) shows a compositional bias: pro residues. Thr24 carries the phosphothreonine; by MAPK14 modification. Ser29 carries the post-translational modification Phosphoserine; by DYRK2 and MAPK14. A compositionally biased stretch (low complexity) spans 34–43 (PAAATISAAG). A Phosphoserine; by DYRK2 modification is found at Ser69. The RING-type zinc finger occupies 81 to 116 (CPVCFDYVLPPILQCQAGHLVCNQCRQKLSCCPTCR). A Phosphothreonine; by DYRK2 modification is found at Thr120. Residues 131 to 323 (VASAVLFPCK…LGINVTISTC (193 aa)) form an SBD region. The SIAH-type zinc-finger motif lies at 134–194 (AVLFPCKYAT…VMSHLMHAHK (61 aa)). Cys139, Cys146, His158, Cys162, Cys169, Cys176, His188, and His193 together coordinate Zn(2+).

Belongs to the SINA (Seven in absentia) family. In terms of assembly, homodimer. Interacts with UBE2E2. Interacts with VAV1, without mediating its ubiquitin-mediated degradation. Interacts with CACYBP/SIP. Probable component of some large E3 complex possibly composed of UBE2D1, SIAH2, CACYBP/SIP, SKP1, APC and TBL1X. Interacts with UBE2I. Interacts with PEG10, which may inhibit its activity. Interacts with EGLN2 and SNCAIP. Interacts with DYRK2. Interacts with PEG3. Interacts with NR1D1 and NR1D2. Interacts with DCC. Interacts with AXIN1. Phosphorylated at Ser-29 by DYRK2; this increases the ubiquitin ligase activity and promotes degradation of EGLN3. Phosphorylated at Thr-24 and Ser-29 by MAPK14, which mediates the degradation by the proteasome of EGLN3. As to expression, widely expressed at low level in embryos and adults. Expressed in a specific population of germ cells within both the mouse ovary and testis. Absent in primordial oocytes but expressed in all growing oocytes, coincident with their recruitment from the pool of quiescent cells. Its level of expression increases as the oocytes mature. Expressed in Graafian follicles and in fertilized zygotes up until the two cell stage, a time of extensive maternal transcript degradation and zygotic gene activation. Expressed in the testis from postmeiotic spermatids.

It localises to the cytoplasm. The protein localises to the nucleus. The enzyme catalyses S-ubiquitinyl-[E2 ubiquitin-conjugating enzyme]-L-cysteine + [acceptor protein]-L-lysine = [E2 ubiquitin-conjugating enzyme]-L-cysteine + N(6)-ubiquitinyl-[acceptor protein]-L-lysine.. It functions in the pathway protein modification; protein ubiquitination. Functionally, E3 ubiquitin-protein ligase that mediates ubiquitination and subsequent proteasomal degradation of target proteins. E3 ubiquitin ligases accept ubiquitin from an E2 ubiquitin-conjugating enzyme in the form of a thioester and then directly transfers the ubiquitin to targeted substrates. Mediates E3 ubiquitin ligase activity either through direct binding to substrates or by functioning as the essential RING domain subunit of larger E3 complexes. Mediates ubiquitination and proteasomal degradation of DYRK2 in response to hypoxia. Promotes monoubiquitination of SNCA. Triggers the ubiquitin-mediated degradation of many substrates, including proteins involved in transcription regulation (GPS2, POU2AF1, PML, NCOR1), a cell surface receptor (DCC), an antiapoptotic protein (BAG1), and a protein involved in synaptic vesicle function in neurons (SYP). It is thereby involved in apoptosis, tumor suppression, cell cycle, transcription and signaling processes. Has some overlapping function with SIAH1. Triggers the ubiquitin-mediated degradation of TRAF2, whereas SIAH1 does not. Regulates cellular clock function via ubiquitination of the circadian transcriptional repressors NR1D1 and NR1D2 leading to their proteasomal degradation. Plays an important role in mediating the rhythmic degradation/clearance of NR1D1 and NR1D2 contributing to their circadian profile of protein abundance. Mediates ubiquitination and degradation of EGLN2 and EGLN3 in response to the unfolded protein response (UPR), leading to their degradation and subsequent stabilization of ATF4. Also part of the Wnt signaling pathway in which it mediates the Wnt-induced ubiquitin-mediated proteasomal degradation of AXIN1. The sequence is that of E3 ubiquitin-protein ligase SIAH2 (Siah2) from Mus musculus (Mouse).